We begin with the raw amino-acid sequence, 315 residues long: Transcription repressor OFP7 (315 aa).

A disordered region spans residues 113–183; that stretch reads YETPRRKIYN…ELPRVTRRPR (71 aa). The segment covering 130–145 has biased composition (basic residues); the sequence is RRRLKKKEKSNSRRRG. Polar residues predominate over residues 160 to 174; it reads LPSSTNLSPEYSSSE. In terms of domain architecture, OVATE spans 230–289; that stretch reads VVKKSEDPYEDFKGSMMEMIVEKKMFEVAELEQLLSCFLSLNAKRHHRAIVRAFSEIWVA.

In terms of tissue distribution, expressed in roots, shoots, stems, flower buds and siliques.

Its subcellular location is the nucleus. Functionally, transcriptional repressor that regulates multiple aspects of plant growth and development through the regulation of BEL1-LIKE (BLH) and KNOX TALE (KNAT) homeodomain transcription factors. The protein is Transcription repressor OFP7 (OFP7) of Arabidopsis thaliana (Mouse-ear cress).